The sequence spans 488 residues: MSSRESASRRPDPLRVTIMQSPSAFSLTIGGHGVATSDYLPVLNPATRQPIGQCPVASEEHVEQARAAAGDAFAVWRQVPYGKRCEQLQALAGILEAHLDELAQLLTHEQGKPLADARGELAGAIAFCQCAGSLPLPEVVHEQSATRLSKTVREPLGVVVAIVPWNYPVSIAFVKPDRRVGCRKHADSQAGADHAADYLRIGELIRDALPAGVINVLAGNDDLGPWLTGHADVAKISFTGSSVTGRHVARSAAADLKRLTLELGGNDAAVVMADSLSDAVVERVFWSAFTNAGQICMATKRLYIHESIYEAFRDKLVAYAQNVVIGDGSQPGVTMGPLQNAKQFAKVMSLIDAVRQRGGRLIECGQMRGGDGYFLPITFVDLPDESAPEVVEEAFGPLLPLLKFRDVDEVIERVNAARTGWLAASGVVIGRSAHGLQQPSTRSVWSTTGCDHAVYSFGGMKASGYGAESGLEGLLEFTTQKTVIIQQQ.

Gly240–Gly245 serves as a coordination point for NAD(+). Catalysis depends on residues Glu262 and Cys296.

This sequence belongs to the aldehyde dehydrogenase family.

It carries out the reaction an aldehyde + NAD(+) + H2O = a carboxylate + NADH + 2 H(+). Involved in an alpha-terpineol oxidation system. The sequence is that of Probable aldehyde dehydrogenase (terPE) from Pseudomonas sp.